A 66-amino-acid polypeptide reads, in one-letter code: MTQLEEQLHNVETVRSITMQLEMALTKLKKDMMRGGDAKQYQVWQRESKALESAIAIIHYVAGDLK.

This sequence belongs to the YscE family. As to quaternary structure, component of the heterodimeric YscE-YscG chaperone. The YscE-YscG chaperone forms a stable ternary complex with YscF/SctF. YscE interacts with YscG, but makes very little direct contact with YscF. Homodimer in solution.

It is found in the cytoplasm. Chaperone of the type III secretion system (T3SS), also called injectisome, which is used to inject bacterial effector proteins into eukaryotic host cells. Along with YscG, prevents premature polymerization of the YscF/SctF needle protein within the cytoplasm. Is also required for stable expression of cytosolic YscF and for YscF secretion. Likely plays a role in targeting YscF present in the cytosolic YscEFG complex to the T3SS apparatus. Required for Yop secretion. The polypeptide is Type 3 secretion system chaperone YscE (Yersinia pestis).